Here is a 379-residue protein sequence, read N- to C-terminus: Chaperone protein DnaJ (379 aa).

A J domain is found at aspartate 5 to glycine 70. The CR-type zinc finger occupies glycine 134 to threonine 212. Zn(2+) is bound by residues cysteine 147, cysteine 150, cysteine 164, cysteine 167, cysteine 186, cysteine 189, cysteine 200, and cysteine 203. 4 CXXCXGXG motif repeats span residues cysteine 147–glycine 154, cysteine 164–glycine 171, cysteine 186–glycine 193, and cysteine 200–glycine 207.

This sequence belongs to the DnaJ family. As to quaternary structure, homodimer. Zn(2+) serves as cofactor.

The protein resides in the cytoplasm. Functionally, participates actively in the response to hyperosmotic and heat shock by preventing the aggregation of stress-denatured proteins and by disaggregating proteins, also in an autonomous, DnaK-independent fashion. Unfolded proteins bind initially to DnaJ; upon interaction with the DnaJ-bound protein, DnaK hydrolyzes its bound ATP, resulting in the formation of a stable complex. GrpE releases ADP from DnaK; ATP binding to DnaK triggers the release of the substrate protein, thus completing the reaction cycle. Several rounds of ATP-dependent interactions between DnaJ, DnaK and GrpE are required for fully efficient folding. Also involved, together with DnaK and GrpE, in the DNA replication of plasmids through activation of initiation proteins. The polypeptide is Chaperone protein DnaJ (Aliivibrio fischeri (strain ATCC 700601 / ES114) (Vibrio fischeri)).